The following is a 226-amino-acid chain: SURF1-like protein (226 aa).

The next 2 helical transmembrane spans lie at 3–23 and 199–219; these read TNLV…WQLS and LEYA…YVIY.

The protein belongs to the SURF1 family.

The protein resides in the cell membrane. The sequence is that of SURF1-like protein from Rickettsia felis (strain ATCC VR-1525 / URRWXCal2) (Rickettsia azadi).